Here is a 503-residue protein sequence, read N- to C-terminus: Glycosyltransferase family 92 protein ZK381.2 (503 aa).

The helical transmembrane segment at 7 to 27 threads the bilayer; it reads YKPCLLIILIFNSVILLFILI. The region spanning 156 to 441 is the GT92 domain; that stretch reads KPVIICISPQ…FKCYFDSFYK (286 aa).

Belongs to the glycosyltransferase 92 family.

It is found in the membrane. The polypeptide is Glycosyltransferase family 92 protein ZK381.2 (Caenorhabditis elegans).